A 368-amino-acid polypeptide reads, in one-letter code: Histidinol-phosphate aminotransferase 1 (368 aa).

At K224 the chain carries N6-(pyridoxal phosphate)lysine.

This sequence belongs to the class-II pyridoxal-phosphate-dependent aminotransferase family. Histidinol-phosphate aminotransferase subfamily. Homodimer. Pyridoxal 5'-phosphate is required as a cofactor.

The enzyme catalyses L-histidinol phosphate + 2-oxoglutarate = 3-(imidazol-4-yl)-2-oxopropyl phosphate + L-glutamate. The protein operates within amino-acid biosynthesis; L-histidine biosynthesis; L-histidine from 5-phospho-alpha-D-ribose 1-diphosphate: step 7/9. This is Histidinol-phosphate aminotransferase 1 (hisC1) from Rhizobium meliloti (strain 1021) (Ensifer meliloti).